The following is a 441-amino-acid chain: Damage-control phosphatase ARMT1 (441 aa).

The residue at position 2 (Ala-2) is an N-acetylalanine. Lys-40 carries the post-translational modification N6-acetyllysine. Ser-102 bears the Phosphoserine mark. Residues Asp-253 and Asn-254 each coordinate Mn(2+). A substrate-binding site is contributed by 253–254 (DN). 2 residues coordinate S-adenosyl-L-methionine: Glu-258 and Asp-291. Residue Asp-291 coordinates Mn(2+). Residues 367 to 371 (DLNYR) and Lys-404 each bind substrate. Residues 401-404 (RTLK) carry the Subfamily III RTxK motif motif.

Belongs to the damage-control phosphatase family. Sugar phosphate phosphatase III subfamily. The cofactor is Mn(2+). Ni(2+) is required as a cofactor. In terms of processing, automethylated.

It catalyses the reaction beta-D-fructose 1-phosphate + H2O = D-fructose + phosphate. It carries out the reaction beta-D-fructose 6-phosphate = dihydroxyacetone + D-glyceraldehyde 3-phosphate. The catalysed reaction is L-glutamyl-[protein] + S-adenosyl-L-methionine = [protein]-L-glutamate 5-O-methyl ester + S-adenosyl-L-homocysteine. Functionally, metal-dependent phosphatase that shows phosphatase activity against several substrates, including fructose-1-phosphate and fructose-6-phosphate. Its preference for fructose-1-phosphate, a strong glycating agent that causes DNA damage rather than a canonical yeast metabolite, suggests a damage-control function in hexose phosphate metabolism. Has also been shown to have O-methyltransferase activity that methylates glutamate residues of target proteins to form gamma-glutamyl methyl ester residues. Possibly methylates PCNA, suggesting it is involved in the DNA damage response. The sequence is that of Damage-control phosphatase ARMT1 from Bos taurus (Bovine).